We begin with the raw amino-acid sequence, 333 residues long: MTSRPLAISAGDPAGVGAEIIAKAWRALRQDGPTFVVIGDAQLLASAGGGVKVRAVTRPQEAAQVFPDALPVLDIPVLSPVVYGRPSPSHAPQIIRWIETGVGLALSGAVSGLVTAPIAKAPLYEAGFQFPGHTEFLAELTAAASMVGARGPVMMLAAGDLRATLVTIHTALAKAPSALTTEAIINSGLVTAQALRKDFGIAEPRLAVAALNPHAGEGGALGREEIDIIAPAVEALRALGVQASGPAPADTLFHPEARARYDGVLCMYHDQALIPVKMLDFWGGVNITLGLPIVRTSPDHGTGFDIAGRGIARPDSLIAAIQLAAKIAARRGV.

Substrate-binding residues include histidine 133 and threonine 134. The a divalent metal cation site is built by histidine 169, histidine 214, and histidine 269. Residues lysine 277, asparagine 286, and arginine 295 each coordinate substrate.

The protein belongs to the PdxA family. Homodimer. Requires Zn(2+) as cofactor. The cofactor is Mg(2+). It depends on Co(2+) as a cofactor.

Its subcellular location is the cytoplasm. It catalyses the reaction 4-(phosphooxy)-L-threonine + NAD(+) = 3-amino-2-oxopropyl phosphate + CO2 + NADH. The protein operates within cofactor biosynthesis; pyridoxine 5'-phosphate biosynthesis; pyridoxine 5'-phosphate from D-erythrose 4-phosphate: step 4/5. In terms of biological role, catalyzes the NAD(P)-dependent oxidation of 4-(phosphooxy)-L-threonine (HTP) into 2-amino-3-oxo-4-(phosphooxy)butyric acid which spontaneously decarboxylates to form 3-amino-2-oxopropyl phosphate (AHAP). This Caulobacter vibrioides (strain ATCC 19089 / CIP 103742 / CB 15) (Caulobacter crescentus) protein is 4-hydroxythreonine-4-phosphate dehydrogenase.